The chain runs to 410 residues: Peptidase T (410 aa).

Position 78 (His78) interacts with Zn(2+). Residue Asp80 is part of the active site. Asp139 contacts Zn(2+). The Proton acceptor role is filled by Glu173. Residues Glu174, Asp196, and His378 each coordinate Zn(2+).

It belongs to the peptidase M20B family. It depends on Zn(2+) as a cofactor.

The protein localises to the cytoplasm. It catalyses the reaction Release of the N-terminal residue from a tripeptide.. Functionally, cleaves the N-terminal amino acid of tripeptides. The chain is Peptidase T from Shewanella woodyi (strain ATCC 51908 / MS32).